A 138-amino-acid polypeptide reads, in one-letter code: MKKPIPRIGSRRNGRIGSRKNGRRIPKGVIHVQASFNNTIVTVTDVRGRVVSWCSAGTCGFRGTRRGTPFAAQTAATNAIRTVVDQGMQRAEVMIKGPGLGRDAALRAIRRSGVLLSFVRDVTPMPHNGCRPPKKRRV.

The tract at residues 1 to 23 is disordered; sequence MKKPIPRIGSRRNGRIGSRKNGR.

This sequence belongs to the universal ribosomal protein uS11 family. Part of the 30S ribosomal subunit.

Its subcellular location is the plastid. The protein resides in the chloroplast. In Amborella trichopoda, this protein is Small ribosomal subunit protein uS11c.